Consider the following 176-residue polypeptide: Disulfide bond formation protein B (176 aa).

The Cytoplasmic portion of the chain corresponds to M1–A14. Residues W15 to W31 form a helical membrane-spanning segment. Residues F32 to C49 are Periplasmic-facing. C41 and C44 form a disulfide bridge. The helical transmembrane segment at A50–P65 threads the bilayer. The Cytoplasmic segment spans residues K66–Y71. A helical transmembrane segment spans residues V72–Y89. The Periplasmic segment spans residues E90–Q144. An intrachain disulfide couples C104 to C130. Residues W145–S163 traverse the membrane as a helical segment. At Q164–R176 the chain is on the cytoplasmic side.

This sequence belongs to the DsbB family.

Its subcellular location is the cell inner membrane. Required for disulfide bond formation in some periplasmic proteins. Acts by oxidizing the DsbA protein. The polypeptide is Disulfide bond formation protein B (Escherichia coli O1:K1 / APEC).